A 383-amino-acid chain; its full sequence is Acetylornithine deacetylase (383 aa).

H80 serves as a coordination point for Zn(2+). D82 is an active-site residue. D112 contacts Zn(2+). The active site involves E144. Zn(2+) contacts are provided by E145, E169, and H355.

It belongs to the peptidase M20A family. ArgE subfamily. As to quaternary structure, homodimer. The cofactor is Zn(2+). Co(2+) serves as cofactor. Requires glutathione as cofactor.

It localises to the cytoplasm. The enzyme catalyses N(2)-acetyl-L-ornithine + H2O = L-ornithine + acetate. The protein operates within amino-acid biosynthesis; L-arginine biosynthesis; L-ornithine from N(2)-acetyl-L-ornithine (linear): step 1/1. Functionally, catalyzes the hydrolysis of the amide bond of N(2)-acetylated L-amino acids. Cleaves the acetyl group from N-acetyl-L-ornithine to form L-ornithine, an intermediate in L-arginine biosynthesis pathway, and a branchpoint in the synthesis of polyamines. The sequence is that of Acetylornithine deacetylase from Salmonella heidelberg (strain SL476).